Reading from the N-terminus, the 371-residue chain is Cytokine receptor-like factor 2 (371 aa).

Residues 1-22 (MGRLVLLWGAAVFLLGGWMALG) form the signal peptide. Over 23 to 231 (QGGAAEGVQI…PTPPKPKLSK (209 aa)) the chain is Extracellular. N-linked (GlcNAc...) asparagine glycosylation is found at Asn-47 and Asn-55. A disulfide bridge links Cys-71 with Cys-84. N-linked (GlcNAc...) asparagine glycosylation is found at Asn-101 and Asn-169. The region spanning 118–211 (KPSSPKHVRF…DWSEVTCWQR (94 aa)) is the Fibronectin type-III domain. A disulfide bridge connects residues Cys-180 and Cys-218. Positions 200-204 (PSDWS) match the WSXWS motif motif. Residues 232 to 252 (FILISSLAILLMVSLLLLSLW) traverse the membrane as a helical segment. Residues 253 to 371 (KLWRVKKFLI…VMNDRSYVAL (119 aa)) lie on the Cytoplasmic side of the membrane. The Box 1 motif signature appears at 261-269 (LIPSVPDPK). Positions 322–336 (ESPRMLDPQTEEKEA) are enriched in basic and acidic residues. The interval 322–347 (ESPRMLDPQTEEKEASGGSLQLPHQP) is disordered.

This sequence belongs to the type I cytokine receptor family. Type 5 subfamily. As to quaternary structure, heterodimer of CRLF2 and IL7R. Expressed in heart, skeletal muscle, kidney and adult and fetal liver. Primarily expressed in dendrites and monocytes. Weakly expressed in T-cells.

It is found in the cell membrane. Its subcellular location is the secreted. Receptor for thymic stromal lymphopoietin (TSLP). Forms a functional complex with TSLP and IL7R which is capable of stimulating cell proliferation through activation of STAT3 and STAT5. Also activates JAK2. Implicated in the development of the hematopoietic system. In Homo sapiens (Human), this protein is Cytokine receptor-like factor 2 (CRLF2).